We begin with the raw amino-acid sequence, 331 residues long: Biotin synthase (331 aa).

The Radical SAM core domain maps to 40 to 269; sequence YRVQLASLLS…HARVRLSAGR (230 aa). Cys55, Cys59, and Cys62 together coordinate [4Fe-4S] cluster. [2Fe-2S] cluster is bound by residues Cys100, Cys132, Cys192, and Arg264.

Belongs to the radical SAM superfamily. Biotin synthase family. As to quaternary structure, homodimer. Requires [4Fe-4S] cluster as cofactor. [2Fe-2S] cluster is required as a cofactor.

The catalysed reaction is (4R,5S)-dethiobiotin + (sulfur carrier)-SH + 2 reduced [2Fe-2S]-[ferredoxin] + 2 S-adenosyl-L-methionine = (sulfur carrier)-H + biotin + 2 5'-deoxyadenosine + 2 L-methionine + 2 oxidized [2Fe-2S]-[ferredoxin]. Its pathway is cofactor biosynthesis; biotin biosynthesis; biotin from 7,8-diaminononanoate: step 2/2. In terms of biological role, catalyzes the conversion of dethiobiotin (DTB) to biotin by the insertion of a sulfur atom into dethiobiotin via a radical-based mechanism. The chain is Biotin synthase from Synechococcus sp. (strain CC9605).